A 499-amino-acid polypeptide reads, in one-letter code: Glycerol kinase (499 aa).

Position 13 (Thr13) interacts with ADP. The ATP site is built by Thr13, Thr14, and Ser15. Residue Thr13 participates in sn-glycerol 3-phosphate binding. Arg17 contributes to the ADP binding site. Arg83, Glu84, Tyr135, and Asp245 together coordinate sn-glycerol 3-phosphate. Glycerol contacts are provided by Arg83, Glu84, Tyr135, Asp245, and Gln246. 2 residues coordinate ADP: Thr267 and Gly310. ATP-binding residues include Thr267, Gly310, Gln314, and Gly411. Residues Gly411 and Asn415 each coordinate ADP.

The protein belongs to the FGGY kinase family.

The catalysed reaction is glycerol + ATP = sn-glycerol 3-phosphate + ADP + H(+). It participates in polyol metabolism; glycerol degradation via glycerol kinase pathway; sn-glycerol 3-phosphate from glycerol: step 1/1. Inhibited by fructose 1,6-bisphosphate (FBP). In terms of biological role, key enzyme in the regulation of glycerol uptake and metabolism. Catalyzes the phosphorylation of glycerol to yield sn-glycerol 3-phosphate. The chain is Glycerol kinase from Xanthomonas axonopodis pv. citri (strain 306).